Consider the following 206-residue polypeptide: ATP-dependent Clp protease proteolytic subunit 1 (206 aa).

Serine 106 serves as the catalytic Nucleophile. Histidine 131 is a catalytic residue.

Belongs to the peptidase S14 family. As to quaternary structure, fourteen ClpP subunits assemble into 2 heptameric rings which stack back to back to give a disk-like structure with a central cavity, resembling the structure of eukaryotic proteasomes.

It is found in the cytoplasm. The enzyme catalyses Hydrolysis of proteins to small peptides in the presence of ATP and magnesium. alpha-casein is the usual test substrate. In the absence of ATP, only oligopeptides shorter than five residues are hydrolyzed (such as succinyl-Leu-Tyr-|-NHMec, and Leu-Tyr-Leu-|-Tyr-Trp, in which cleavage of the -Tyr-|-Leu- and -Tyr-|-Trp bonds also occurs).. Its function is as follows. Cleaves peptides in various proteins in a process that requires ATP hydrolysis. Has a chymotrypsin-like activity. Plays a major role in the degradation of misfolded proteins. In Methylococcus capsulatus (strain ATCC 33009 / NCIMB 11132 / Bath), this protein is ATP-dependent Clp protease proteolytic subunit 1.